A 678-amino-acid polypeptide reads, in one-letter code: DNA ligase (678 aa).

NAD(+)-binding positions include 35–39 (DEEYD), 84–85 (SL), and Glu-115. Residue Lys-117 is the N6-AMP-lysine intermediate of the active site. The NAD(+) site is built by Arg-138, Glu-172, Lys-288, and Lys-312. Positions 406, 409, 425, and 430 each coordinate Zn(2+). The 90-residue stretch at 589-678 (VQSKILSNLT…IKNLRQQKLF (90 aa)) folds into the BRCT domain.

This sequence belongs to the NAD-dependent DNA ligase family. LigA subfamily. Mg(2+) serves as cofactor. Mn(2+) is required as a cofactor.

The catalysed reaction is NAD(+) + (deoxyribonucleotide)n-3'-hydroxyl + 5'-phospho-(deoxyribonucleotide)m = (deoxyribonucleotide)n+m + AMP + beta-nicotinamide D-nucleotide.. In terms of biological role, DNA ligase that catalyzes the formation of phosphodiester linkages between 5'-phosphoryl and 3'-hydroxyl groups in double-stranded DNA using NAD as a coenzyme and as the energy source for the reaction. It is essential for DNA replication and repair of damaged DNA. This is DNA ligase from Pseudothermotoga lettingae (strain ATCC BAA-301 / DSM 14385 / NBRC 107922 / TMO) (Thermotoga lettingae).